Reading from the N-terminus, the 471-residue chain is Adenosylhomocysteinase (471 aa).

Substrate is bound by residues Thr60, Asp135, and Glu196. 197–199 (TTT) contributes to the NAD(+) binding site. The substrate site is built by Lys226 and Asp230. NAD(+)-binding positions include Asn231, 260-265 (GYGDVG), Glu283, Asn318, 339-341 (IGH), and Asn387.

This sequence belongs to the adenosylhomocysteinase family. The cofactor is NAD(+).

The protein localises to the cytoplasm. It carries out the reaction S-adenosyl-L-homocysteine + H2O = L-homocysteine + adenosine. It functions in the pathway amino-acid biosynthesis; L-homocysteine biosynthesis; L-homocysteine from S-adenosyl-L-homocysteine: step 1/1. May play a key role in the regulation of the intracellular concentration of adenosylhomocysteine. This chain is Adenosylhomocysteinase, found in Chlorobium phaeobacteroides (strain DSM 266 / SMG 266 / 2430).